Reading from the N-terminus, the 429-residue chain is Ribosomal RNA small subunit methyltransferase B (429 aa).

Residues 254 to 260, aspartate 277, aspartate 303, and aspartate 322 contribute to the S-adenosyl-L-methionine site; that span reads CAAPGGK. Cysteine 375 functions as the Nucleophile in the catalytic mechanism.

It belongs to the class I-like SAM-binding methyltransferase superfamily. RsmB/NOP family.

It is found in the cytoplasm. It carries out the reaction cytidine(967) in 16S rRNA + S-adenosyl-L-methionine = 5-methylcytidine(967) in 16S rRNA + S-adenosyl-L-homocysteine + H(+). Functionally, specifically methylates the cytosine at position 967 (m5C967) of 16S rRNA. The protein is Ribosomal RNA small subunit methyltransferase B of Pectobacterium atrosepticum (strain SCRI 1043 / ATCC BAA-672) (Erwinia carotovora subsp. atroseptica).